Consider the following 437-residue polypeptide: Phosphomethylpyrimidine synthase (437 aa).

Substrate is bound by residues Asn69, Met98, Tyr127, His163, 185–187 (SRG), 226–229 (DACR), and Glu265. His269 contacts Zn(2+). Position 292 (Tyr292) interacts with substrate. His333 contacts Zn(2+). [4Fe-4S] cluster is bound by residues Cys409, Cys412, and Cys416.

The protein belongs to the ThiC family. [4Fe-4S] cluster serves as cofactor.

The enzyme catalyses 5-amino-1-(5-phospho-beta-D-ribosyl)imidazole + S-adenosyl-L-methionine = 4-amino-2-methyl-5-(phosphooxymethyl)pyrimidine + CO + 5'-deoxyadenosine + formate + L-methionine + 3 H(+). It participates in cofactor biosynthesis; thiamine diphosphate biosynthesis. Its function is as follows. Catalyzes the synthesis of the hydroxymethylpyrimidine phosphate (HMP-P) moiety of thiamine from aminoimidazole ribotide (AIR) in a radical S-adenosyl-L-methionine (SAM)-dependent reaction. This is Phosphomethylpyrimidine synthase from Clostridium botulinum (strain Kyoto / Type A2).